Reading from the N-terminus, the 87-residue chain is uncharacterized protein (87 aa).

Belongs to the YlmC/YmxH family.

This is an uncharacterized protein from Clostridium acetobutylicum (strain ATCC 824 / DSM 792 / JCM 1419 / IAM 19013 / LMG 5710 / NBRC 13948 / NRRL B-527 / VKM B-1787 / 2291 / W).